A 73-amino-acid polypeptide reads, in one-letter code: Adipokinetic prohormone type 2 (73 aa).

Residues 1–20 form the signal peptide; that stretch reads MCRIFIVLLVVAALAIIIEG. A Pyrrolidone carboxylic acid modification is found at Gln21. Asn30 carries the post-translational modification Asparagine amide. Positions 34-73 are excised as a propeptide; the sequence is SISSEQINDDCNPEEAIFQIYKLIVSEGERIRACQRDGKM.

As to expression, expressed in corpora cardiaca (CC), corpora allata (CA) and gnathal ganglion (GNG) (at protein level). Expression in CC and CA detected in all animals, expression in GNG detected in few animals (at protein level). Not expressed in antennal lobe (AL) (at protein level).

Its subcellular location is the secreted. Functionally, this hormone, released from cells in the corpora cardiaca, causes release of diglycerides from the fat body and stimulation of muscles to use these diglycerides as an energy source during energy-demanding processes. The protein is Adipokinetic prohormone type 2 of Agrotis ipsilon (Black cutworm moth).